A 142-amino-acid polypeptide reads, in one-letter code: Transcriptional regulator MraZ (142 aa).

SpoVT-AbrB domains lie at 5–47 and 76–119; these read EYQH…TINE and ACIV…SREK.

Belongs to the MraZ family. Forms oligomers.

It is found in the cytoplasm. The protein resides in the nucleoid. The polypeptide is Transcriptional regulator MraZ (Clostridium botulinum (strain Alaska E43 / Type E3)).